The chain runs to 242 residues: ATP synthase subunit a (242 aa).

6 helical membrane passes run 29 to 49 (SSIY…LAFY), 84 to 104 (FIPL…LGMT), 114 to 134 (IIVT…VGFV), 140 to 160 (FLTL…MIVI), 181 to 201 (MAGH…MIYL), and 203 to 223 (FLPI…AILQ).

The protein belongs to the ATPase A chain family. In terms of assembly, F-type ATPases have 2 components, CF(1) - the catalytic core - and CF(0) - the membrane proton channel. CF(1) has five subunits: alpha(3), beta(3), gamma(1), delta(1), epsilon(1). CF(0) has three main subunits: a(1), b(2) and c(9-12). The alpha and beta chains form an alternating ring which encloses part of the gamma chain. CF(1) is attached to CF(0) by a central stalk formed by the gamma and epsilon chains, while a peripheral stalk is formed by the delta and b chains.

The protein resides in the cell membrane. Its function is as follows. Key component of the proton channel; it plays a direct role in the translocation of protons across the membrane. This chain is ATP synthase subunit a, found in Rickettsia africae (strain ESF-5).